Here is a 29-residue protein sequence, read N- to C-terminus: Toxin II.9 (29 aa).

The LCN-type CS-alpha/beta domain occupies 2 to 29 (KDGYLVNKYTGCKVNCYKLGENKFCNRE).

It belongs to the long (4 C-C) scorpion toxin superfamily. Sodium channel inhibitor family. Beta subfamily. In terms of tissue distribution, expressed by the venom gland.

The protein resides in the secreted. In terms of biological role, binds to sodium channels (Nav) and shift the voltage of activation toward more negative potentials. This toxin is active on crustaceans. In Centruroides limpidus (Mexican scorpion), this protein is Toxin II.9.